The primary structure comprises 132 residues: L-ectoine synthase (132 aa).

The protein belongs to the ectoine synthase family.

The catalysed reaction is (2S)-4-acetamido-2-aminobutanoate = L-ectoine + H2O. The protein operates within amine and polyamine biosynthesis; ectoine biosynthesis; L-ectoine from L-aspartate 4-semialdehyde: step 3/3. Its function is as follows. Catalyzes the circularization of gamma-N-acetyl-alpha,gamma-diaminobutyric acid (ADABA) to ectoine (1,4,5,6-tetrahydro-2-methyl-4-pyrimidine carboxylic acid), which is an excellent osmoprotectant. In Saccharophagus degradans (strain 2-40 / ATCC 43961 / DSM 17024), this protein is L-ectoine synthase.